An 85-amino-acid polypeptide reads, in one-letter code: Small ribosomal subunit protein uS17 (85 aa).

Belongs to the universal ribosomal protein uS17 family. In terms of assembly, part of the 30S ribosomal subunit.

Functionally, one of the primary rRNA binding proteins, it binds specifically to the 5'-end of 16S ribosomal RNA. This chain is Small ribosomal subunit protein uS17, found in Citrifermentans bemidjiense (strain ATCC BAA-1014 / DSM 16622 / JCM 12645 / Bem) (Geobacter bemidjiensis).